The following is a 96-amino-acid chain: Co-chaperonin GroES (96 aa).

This sequence belongs to the GroES chaperonin family. As to quaternary structure, heptamer of 7 subunits arranged in a ring. Interacts with the chaperonin GroEL.

It is found in the cytoplasm. Together with the chaperonin GroEL, plays an essential role in assisting protein folding. The GroEL-GroES system forms a nano-cage that allows encapsulation of the non-native substrate proteins and provides a physical environment optimized to promote and accelerate protein folding. GroES binds to the apical surface of the GroEL ring, thereby capping the opening of the GroEL channel. This chain is Co-chaperonin GroES, found in Shewanella loihica (strain ATCC BAA-1088 / PV-4).